Reading from the N-terminus, the 195-residue chain is dITP/XTP pyrophosphatase (195 aa).

8 to 13 (SNNQGK) lines the substrate pocket. Residues E39 and D68 each coordinate Mg(2+). The active-site Proton acceptor is D68. Substrate is bound by residues S69, 149 to 152 (FGYD), K172, and 177 to 178 (HR).

It belongs to the HAM1 NTPase family. Homodimer. Mg(2+) serves as cofactor.

It catalyses the reaction XTP + H2O = XMP + diphosphate + H(+). The catalysed reaction is dITP + H2O = dIMP + diphosphate + H(+). The enzyme catalyses ITP + H2O = IMP + diphosphate + H(+). In terms of biological role, pyrophosphatase that catalyzes the hydrolysis of nucleoside triphosphates to their monophosphate derivatives, with a high preference for the non-canonical purine nucleotides XTP (xanthosine triphosphate), dITP (deoxyinosine triphosphate) and ITP. Seems to function as a house-cleaning enzyme that removes non-canonical purine nucleotides from the nucleotide pool, thus preventing their incorporation into DNA/RNA and avoiding chromosomal lesions. This Staphylococcus aureus (strain COL) protein is dITP/XTP pyrophosphatase.